A 258-amino-acid chain; its full sequence is Isoprenyl transferase 2 (258 aa).

D35 is a catalytic residue. D35 is a binding site for Mg(2+). Substrate-binding positions include 36 to 39 (GNRR), W40, R50, and 81 to 83 (SDD). The active-site Proton acceptor is N84. Substrate contacts are provided by residues R87, R207, and 213–215 (RLS). Position 226 (E226) interacts with Mg(2+).

The protein belongs to the UPP synthase family. Homodimer. Mg(2+) is required as a cofactor.

Catalyzes the condensation of isopentenyl diphosphate (IPP) with allylic pyrophosphates generating different type of terpenoids. The sequence is that of Isoprenyl transferase 2 from Streptomyces coelicolor (strain ATCC BAA-471 / A3(2) / M145).